Here is a 181-residue protein sequence, read N- to C-terminus: UPF0301 protein MXAN_2022 (181 aa).

The protein belongs to the UPF0301 (AlgH) family.

This is UPF0301 protein MXAN_2022 from Myxococcus xanthus (strain DK1622).